The chain runs to 300 residues: Nucleotide-binding protein Dshi_0209 (300 aa).

Position 20–27 (20–27) interacts with ATP; the sequence is GPSGAGRT. Position 67–70 (67–70) interacts with GTP; that stretch reads DART.

The protein belongs to the RapZ-like family.

Its function is as follows. Displays ATPase and GTPase activities. The sequence is that of Nucleotide-binding protein Dshi_0209 from Dinoroseobacter shibae (strain DSM 16493 / NCIMB 14021 / DFL 12).